The primary structure comprises 240 residues: Purine nucleoside phosphorylase DeoD-type (240 aa).

Histidine 5 lines the a purine D-ribonucleoside pocket. Residues glycine 21, arginine 25, arginine 44, and 88–91 (RVGS) each bind phosphate. A purine D-ribonucleoside contacts are provided by residues 181–183 (EME) and 205–206 (SD). Aspartate 206 functions as the Proton donor in the catalytic mechanism.

Belongs to the PNP/UDP phosphorylase family. As to quaternary structure, homohexamer; trimer of homodimers.

The catalysed reaction is a purine D-ribonucleoside + phosphate = a purine nucleobase + alpha-D-ribose 1-phosphate. It carries out the reaction a purine 2'-deoxy-D-ribonucleoside + phosphate = a purine nucleobase + 2-deoxy-alpha-D-ribose 1-phosphate. Its function is as follows. Catalyzes the reversible phosphorolytic breakdown of the N-glycosidic bond in the beta-(deoxy)ribonucleoside molecules, with the formation of the corresponding free purine bases and pentose-1-phosphate. In Enterobacter sp. (strain 638), this protein is Purine nucleoside phosphorylase DeoD-type.